The primary structure comprises 156 residues: Cyanate hydratase (156 aa).

Residues Arg-96, Glu-99, and Ser-122 contribute to the active site.

This sequence belongs to the cyanase family.

The enzyme catalyses cyanate + hydrogencarbonate + 3 H(+) = NH4(+) + 2 CO2. Catalyzes the reaction of cyanate with bicarbonate to produce ammonia and carbon dioxide. The chain is Cyanate hydratase from Burkholderia mallei (strain NCTC 10247).